The sequence spans 229 residues: ATP synthase subunit a (229 aa).

The next 6 membrane-spanning stretches (helical) occupy residues 25-45 (ADAVVYTWLIMIGLVVLSIAA), 82-102 (FFPLVATLALFILVSNLIGLI), 104-124 (GFFPPTANINTTAACAVVVFV), 142-162 (FLGPIAWLAPMMFFIEVIGHL), 181-201 (LVLIIFFGLAPFVVPLPMMLM), and 202-222 (GVLVSFIQAFVFMLLAMIYIQ).

It belongs to the ATPase A chain family. F-type ATPases have 2 components, CF(1) - the catalytic core - and CF(0) - the membrane proton channel. CF(1) has five subunits: alpha(3), beta(3), gamma(1), delta(1), epsilon(1). CF(0) has three main subunits: a(1), b(2) and c(9-12). The alpha and beta chains form an alternating ring which encloses part of the gamma chain. CF(1) is attached to CF(0) by a central stalk formed by the gamma and epsilon chains, while a peripheral stalk is formed by the delta and b chains.

The protein resides in the cell inner membrane. In terms of biological role, key component of the proton channel; it plays a direct role in the translocation of protons across the membrane. The protein is ATP synthase subunit a of Geobacter sp. (strain M21).